The sequence spans 92 residues: Putative protein IntG (92 aa).

Belongs to the 'phage' integrase family.

This chain is Putative protein IntG (intG), found in Escherichia coli (strain K12).